Reading from the N-terminus, the 131-residue chain is Capsid protein (131 aa).

2 residues coordinate Ca(2+): glutamine 2 and tyrosine 131.

It belongs to the Leviviricetes capsid protein family. In terms of assembly, homodimer. The capsid proteins form dimers that assemble by group of 5. Twelve such pentamers are linked together with free dimers. The homodimers binds to the viral RNA via an operator hairpin, but also to many other RNA sequences in the viral genome; this interaction probably shifts the virus from the replicative to the assembly phase and ensures specific encapsidation of the viral genome.

It is found in the virion. Its function is as follows. Capsid protein self-assembles to form an icosahedral capsid with a T=3 symmetry, about 26 nm in diameter, and consisting of 89 capsid proteins dimers (178 capsid proteins). Involved in viral genome encapsidation through the interaction between a capsid protein dimer and the multiple packaging signals present in the RNA genome. The capsid also contains 1 copy of the A2 maturation protein. In terms of biological role, acts as a translational repressor of viral replicase synthesis late in infection. This latter function is the result of capsid protein interaction with an RNA hairpin which contains the replicase ribosome-binding site. The chain is Capsid protein from Pseudomonas phage PRR1 (Bacteriophage PRR1).